The following is a 426-amino-acid chain: Serine--tRNA ligase (426 aa).

233-235 (TAE) contacts L-serine. 264–266 (RAE) contacts ATP. Position 287 (Glu-287) interacts with L-serine. 351–354 (EISS) is a binding site for ATP. Ser-387 contributes to the L-serine binding site.

The protein belongs to the class-II aminoacyl-tRNA synthetase family. Type-1 seryl-tRNA synthetase subfamily. As to quaternary structure, homodimer. The tRNA molecule binds across the dimer.

It is found in the cytoplasm. It carries out the reaction tRNA(Ser) + L-serine + ATP = L-seryl-tRNA(Ser) + AMP + diphosphate + H(+). It catalyses the reaction tRNA(Sec) + L-serine + ATP = L-seryl-tRNA(Sec) + AMP + diphosphate + H(+). The protein operates within aminoacyl-tRNA biosynthesis; selenocysteinyl-tRNA(Sec) biosynthesis; L-seryl-tRNA(Sec) from L-serine and tRNA(Sec): step 1/1. Its function is as follows. Catalyzes the attachment of serine to tRNA(Ser). Is also able to aminoacylate tRNA(Sec) with serine, to form the misacylated tRNA L-seryl-tRNA(Sec), which will be further converted into selenocysteinyl-tRNA(Sec). The sequence is that of Serine--tRNA ligase from Clostridium novyi (strain NT).